The primary structure comprises 541 residues: Probable inorganic phosphate transporter 1-8 (541 aa).

Topologically, residues 1-28 (MARQEQQQHLQVLSALDAAKTQWYHFTA) are cytoplasmic. A helical membrane pass occupies residues 29–49 (IVVAGMGFFTDAYDLFCISLV). Topologically, residues 50–74 (TKLLGRIYYTDLAKENPGSLPPNVA) are extracellular. A helical transmembrane segment spans residues 75–95 (AAVNGVAFCGTLAGQLFFGWL). Residues 96 to 102 (GDKLGRK) lie on the Cytoplasmic side of the membrane. Residues 103 to 123 (SVYGMTLLMMVICSIASGLSF) form a helical membrane-spanning segment. At 124–126 (SHT) the chain is on the extracellular side. A helical transmembrane segment spans residues 127–147 (PTSVMATLCFFRFWLGFGIGG). The Cytoplasmic portion of the chain corresponds to 148–168 (DYPLSATIMSEYANKKTRGAF). A helical membrane pass occupies residues 169 to 189 (IAAVFAMQGFGILAGGIVTLI). Residues 190–215 (ISSAFRAGFPAPAYQDDRAGSTVRQA) lie on the Extracellular side of the membrane. A helical membrane pass occupies residues 216–236 (DYVWRIILMLGAMPALLTYYW). The Cytoplasmic portion of the chain corresponds to 237–297 (RMKMPETARY…GLFSRQFARR (61 aa)). Residues 298 to 318 (HGLHLVGTATTWFLLDIAFYS) traverse the membrane as a helical segment. The Extracellular portion of the chain corresponds to 319–353 (QNLFQKDIFTSINWIPKAKTMSALEEVFRIARAQT). A helical transmembrane segment spans residues 354-374 (LIALCGTVPGYWFTVFLIDIV). Residues 375 to 376 (GR) lie on the Cytoplasmic side of the membrane. A helical transmembrane segment spans residues 377-397 (FAIQLLGFFMMTVFMLGLAVP). At 398–404 (YHHWTTK) the chain is on the extracellular side. A helical transmembrane segment spans residues 405-425 (GNHIGFVVMYAFTFFFANFGP). Over 426–447 (NSTTFIVPAEIFPARLRSTCHG) the chain is Cytoplasmic. A helical membrane pass occupies residues 448 to 468 (ISAAAGKAGAIIGSFGFLYAA). Residues 469–486 (QDPHKPDAGYKPGIGVRN) lie on the Extracellular side of the membrane. Residues 487-507 (SLFVLAGCNLLGFICTFLVPE) form a helical membrane-spanning segment. At 508 to 541 (SKGKSLEEMSGEAEDDDDEVAAAGGGAAVRPQTA) the chain is on the cytoplasmic side. Residues 514-541 (EEMSGEAEDDDDEVAAAGGGAAVRPQTA) form a disordered region. Acidic residues predominate over residues 516-527 (MSGEAEDDDDEV).

This sequence belongs to the major facilitator superfamily. Phosphate:H(+) symporter (TC 2.A.1.9) family.

The protein resides in the membrane. In terms of biological role, high-affinity transporter for external inorganic phosphate. This chain is Probable inorganic phosphate transporter 1-8 (PHT1-8), found in Oryza sativa subsp. japonica (Rice).